The sequence spans 635 residues: Transcription termination factor FttA (635 aa).

2 KHa regions span residues 1–69 and 4–69; these read MSAE…PSVL and EDIL…PSVL. The KHb stretch occupies residues 70–137; that stretch reads VEPDIAKDKI…WAPKPVRTPP (68 aa). 2 metallo-beta-lactamase N-terminus regions span residues 179-382 and 179-383; these read WVRT…YGGY and WVRT…GGYD. Beta-Casp stretches follow at residues 180 to 577 and 383 to 576; these read VRTS…GFSG and DDVL…EGFS. Zn(2+)-binding residues include H241, H243, D245, H246, H328, and D351. Metallo-beta-lactamase C-terminus regions lie at residues 577 to 635 and 578 to 635; these read GHSD…IRLR and HSDR…IRLR. Position 602 (H602) interacts with Zn(2+).

This sequence belongs to the metallo-beta-lactamase superfamily. RNA-metabolizing metallo-beta-lactamase-like family. FttA subfamily. Homodimer. Interacts with RNA polymerase (RNAP); interaction is not dependent on DNA or RNA. Interacts with the Spt4-Spt5 complex. The cofactor is Zn(2+).

The protein resides in the chromosome. In terms of biological role, terminates transcription on the whole genome. Termination is linked to FttA-mediated RNA cleavage and does not require NTP hydrolysis. Cleaves endonucleolytically at the RNA exit channel of RNA polymerase (RNAP); the 5'-3' exonuclease activity of this protein degrades the nascent RNA released from RNAP. Its function is as follows. Terminates transcription genome-wide. Transcription termination is most effective in vivo on RNAs with more than one U4-tract in their 3'-ends (including non-protein coding RNAs); U4-tracts are recognized by this protein. Also plays a role in termination of RNAs without U-tracts by an unknown mechanism. Has endonuclease activity after U-rich tracts in transcription termination sites. Binds RNA at U4-tracts found directly upstream of the experimentally determined transcription termination sites; binds preferentially to RNAs with more U4-tracts at their 3'-ends. The chain is Transcription termination factor FttA from Methanococcus maripaludis (strain DSM 14266 / JCM 13030 / NBRC 101832 / S2 / LL).